The primary structure comprises 120 residues: Transmembrane protein 010R (120 aa).

2 helical membrane passes run phenylalanine 40–threonine 60 and serine 72–leucine 92.

This sequence belongs to the IIV-6 010R family.

The protein resides in the membrane. This chain is Transmembrane protein 010R, found in Invertebrate iridescent virus 6 (IIV-6).